Consider the following 529-residue polypeptide: Amino acid transporter heavy chain SLC3A2 (529 aa).

A disordered region spans residues 1–20 (MSQDTEVDMKEVELNELEPE). The Cytoplasmic segment spans residues 1–84 (MSQDTEVDMK…SPGWVRTRWA (84 aa)). S2 is modified (phosphoserine). T5 is subject to Phosphothreonine. The span at 7-20 (VDMKEVELNELEPE) shows a compositional bias: basic and acidic residues. Residue K49 forms a Glycyl lysine isopeptide (Lys-Gly) (interchain with G-Cter in ubiquitin) linkage. Residue S65 is modified to Phosphoserine. A Glycyl lysine isopeptide (Lys-Gly) (interchain with G-Cter in SUMO2) cross-link involves residue K66. Residues 85–105 (LLLLFWLGWIGMLAGAVVIIV) traverse the membrane as a helical; Signal-anchor for type II membrane protein segment. Over 106–529 (RAPRCRELPV…GLLLHFPYVA (424 aa)) the chain is Extracellular. N266 carries N-linked (GlcNAc...) asparagine glycosylation. Phosphoserine is present on residues S307 and S309. 2 N-linked (GlcNAc...) asparagine glycosylation sites follow: N325 and N405. Residue S426 is modified to Phosphoserine.

Belongs to the SLC3A transporter family. Disulfide-linked heterodimer with a non-glycosylated light chain (SLC7A5, SLC7A6, SLC7A7, SLC7A8, SLC7A10 or SLC7A11). Interacts with TLCD3A/CT120 and ICAM1. Constitutively and specifically associates with beta-1 integrins (alpha-2/beta-1, alpha-3/beta-1, alpha-5/beta-1 and alpha-6/beta-1), but minimally with alpha-4/beta-1. Interacts with LAPTM4B; recruits SLC3A2 and SLC7A5 to lysosomes to promote leucine uptake into these organelles and is required for mTORC1 activation. Phosphorylation on Ser-307 or Ser-309 and on Ser-426 by ecto-protein kinases favors heterotypic cell-cell interactions. In terms of processing, N-glycosylated; N-glycosylation is crucial for trafficking and stability of SLC3A2 to the plasma membrane.

The protein localises to the apical cell membrane. It is found in the cell membrane. Its subcellular location is the cell junction. The protein resides in the lysosome membrane. It localises to the melanosome. The protein localises to the basolateral cell membrane. Acts as a chaperone that facilitates biogenesis and trafficking of functional transporters heterodimers to the plasma membrane. Forms heterodimer with SLC7 family transporters (SLC7A5, SLC7A6, SLC7A7, SLC7A8, SLC7A10 and SLC7A11), a group of amino-acid antiporters. Heterodimers function as amino acids exchangers, the specificity of the substrate depending on the SLC7A subunit. Heterodimers formed by SLC3A2/SLC7A6 or SLC3A2/SLC7A7 mediate the uptake of dibasic amino acids. Heterodimer SLC3A2/SLC7A11 functions as an antiporter by mediating the exchange of extracellular anionic L-cystine and intracellular L-glutamate across the cellular plasma membrane. SLC3A2/SLC7A10 translocates small neutral L- and D-amino acids across the plasma membrane. SLC3A2/SLC75 or SLC3A2/SLC7A8 translocates neutral amino acids with broad specificity, thyroid hormones and L-DOPA. SLC3A2 is essential for plasma membrane localization, stability, and the transport activity of SLC7A5 and SLC7A8. When associated with LAPTM4B, the heterodimer SLC7A5 is recruited to lysosomes to promote leucine uptake into these organelles, and thereby mediates mTORC1 activation. Modulates integrin-related signaling and is essential for integrin-dependent cell spreading, migration and tumor progression. The protein is Amino acid transporter heavy chain SLC3A2 of Oryctolagus cuniculus (Rabbit).